A 346-amino-acid chain; its full sequence is Uroporphyrinogen decarboxylase (346 aa).

Substrate is bound by residues 21–25 (RQAGR), Asp71, Tyr146, Ser201, and His316.

The protein belongs to the uroporphyrinogen decarboxylase family. Homodimer.

It localises to the cytoplasm. The catalysed reaction is uroporphyrinogen III + 4 H(+) = coproporphyrinogen III + 4 CO2. The protein operates within porphyrin-containing compound metabolism; protoporphyrin-IX biosynthesis; coproporphyrinogen-III from 5-aminolevulinate: step 4/4. Its function is as follows. Catalyzes the decarboxylation of four acetate groups of uroporphyrinogen-III to yield coproporphyrinogen-III. The polypeptide is Uroporphyrinogen decarboxylase (Rickettsia rickettsii (strain Iowa)).